A 253-amino-acid chain; its full sequence is Small ribosomal subunit protein uS2 (253 aa).

It belongs to the universal ribosomal protein uS2 family.

The chain is Small ribosomal subunit protein uS2 from Cereibacter sphaeroides (strain ATCC 17023 / DSM 158 / JCM 6121 / CCUG 31486 / LMG 2827 / NBRC 12203 / NCIMB 8253 / ATH 2.4.1.) (Rhodobacter sphaeroides).